We begin with the raw amino-acid sequence, 304 residues long: Probable aspartoacylase (304 aa).

Positions 13 and 16 each coordinate Zn(2+). Residues Arg-55 and Asn-62 to Arg-63 each bind substrate. Position 105 (His-105) interacts with Zn(2+). Residues Glu-163 and Tyr-273 each coordinate substrate.

This sequence belongs to the AspA/AstE family. Aspartoacylase subfamily. The cofactor is Zn(2+).

It carries out the reaction an N-acyl-L-aspartate + H2O = a carboxylate + L-aspartate. The protein is Probable aspartoacylase of Prochlorococcus marinus (strain MIT 9313).